A 417-amino-acid chain; its full sequence is Equilibrative nucleotide transporter 2 (417 aa).

11 helical membrane passes run 20–40, 52–72, 85–105, 109–129, 144–164, 185–205, 265–285, 292–312, 328–348, 354–374, and 393–413; these read AVCW…LTIV, PSRI…SVLV, LFGY…NLAT, GGIG…LADA, PEFL…TSGL, LFFA…AYVF, LAVT…GFLS, SLGD…DLVG, CLLI…ITGI, WMIF…VCVI, and LVLY…LWLV.

Belongs to the SLC29A/ENT transporter (TC 2.A.57) family. In terms of tissue distribution, expressed in leaves and flowers.

It localises to the cell membrane. May be involved in nucleoside transport. This chain is Equilibrative nucleotide transporter 2 (ENT2), found in Arabidopsis thaliana (Mouse-ear cress).